A 368-amino-acid polypeptide reads, in one-letter code: Quinolinate synthase (368 aa).

Residues His46 and Ser63 each coordinate iminosuccinate. Cys110 is a binding site for [4Fe-4S] cluster. Iminosuccinate contacts are provided by residues 141–143 and Ser162; that span reads YVN. Cys230 lines the [4Fe-4S] cluster pocket. Residues 256 to 258 and Thr273 contribute to the iminosuccinate site; that span reads HPE. Cys320 provides a ligand contact to [4Fe-4S] cluster.

The protein belongs to the quinolinate synthase family. Type 3 subfamily. The cofactor is [4Fe-4S] cluster.

It is found in the cytoplasm. The enzyme catalyses iminosuccinate + dihydroxyacetone phosphate = quinolinate + phosphate + 2 H2O + H(+). Its pathway is cofactor biosynthesis; NAD(+) biosynthesis; quinolinate from iminoaspartate: step 1/1. In terms of biological role, catalyzes the condensation of iminoaspartate with dihydroxyacetone phosphate to form quinolinate. This chain is Quinolinate synthase, found in Bacillus cereus (strain ATCC 10987 / NRS 248).